The primary structure comprises 508 residues: Photosystem II CP47 reaction center protein (508 aa).

The next 6 helical transmembrane spans lie at 21–36 (SVHI…WAGS), 101–115 (IVFS…IWHW), 140–156 (GIHL…FGAF), 203–218 (IAAG…FHLS), 237–252 (VLSS…AFVV), and 457–472 (SFAL…HGAR).

The protein belongs to the PsbB/PsbC family. PsbB subfamily. As to quaternary structure, PSII is composed of 1 copy each of membrane proteins PsbA, PsbB, PsbC, PsbD, PsbE, PsbF, PsbH, PsbI, PsbJ, PsbK, PsbL, PsbM, PsbT, PsbX, PsbY, PsbZ, Psb30/Ycf12, at least 3 peripheral proteins of the oxygen-evolving complex and a large number of cofactors. It forms dimeric complexes. Requires Binds multiple chlorophylls. PSII binds additional chlorophylls, carotenoids and specific lipids. as cofactor.

The protein localises to the plastid. It is found in the chloroplast thylakoid membrane. Its function is as follows. One of the components of the core complex of photosystem II (PSII). It binds chlorophyll and helps catalyze the primary light-induced photochemical processes of PSII. PSII is a light-driven water:plastoquinone oxidoreductase, using light energy to abstract electrons from H(2)O, generating O(2) and a proton gradient subsequently used for ATP formation. The polypeptide is Photosystem II CP47 reaction center protein (Acorus calamus var. americanus (American sweet flag)).